The following is a 336-amino-acid chain: Holliday junction branch migration complex subunit RuvB (336 aa).

The segment at 4–185 (MDERLLSGES…FGVLSRLEYY (182 aa)) is large ATPase domain (RuvB-L). ATP contacts are provided by residues Leu-24, Arg-25, Gly-66, Lys-69, Thr-70, Thr-71, 132–134 (EDF), Arg-175, Tyr-185, and Arg-222. Thr-70 is a Mg(2+) binding site. Residues 186–256 (TVDQLSAIVE…ITQMALELLQ (71 aa)) form a small ATPAse domain (RuvB-S) region. The segment at 259–336 (KLGLDHIDHK…EHFGMEMPKV (78 aa)) is head domain (RuvB-H). Positions 314 and 319 each coordinate DNA.

Belongs to the RuvB family. As to quaternary structure, homohexamer. Forms an RuvA(8)-RuvB(12)-Holliday junction (HJ) complex. HJ DNA is sandwiched between 2 RuvA tetramers; dsDNA enters through RuvA and exits via RuvB. An RuvB hexamer assembles on each DNA strand where it exits the tetramer. Each RuvB hexamer is contacted by two RuvA subunits (via domain III) on 2 adjacent RuvB subunits; this complex drives branch migration. In the full resolvosome a probable DNA-RuvA(4)-RuvB(12)-RuvC(2) complex forms which resolves the HJ.

It localises to the cytoplasm. The enzyme catalyses ATP + H2O = ADP + phosphate + H(+). Its function is as follows. The RuvA-RuvB-RuvC complex processes Holliday junction (HJ) DNA during genetic recombination and DNA repair, while the RuvA-RuvB complex plays an important role in the rescue of blocked DNA replication forks via replication fork reversal (RFR). RuvA specifically binds to HJ cruciform DNA, conferring on it an open structure. The RuvB hexamer acts as an ATP-dependent pump, pulling dsDNA into and through the RuvAB complex. RuvB forms 2 homohexamers on either side of HJ DNA bound by 1 or 2 RuvA tetramers; 4 subunits per hexamer contact DNA at a time. Coordinated motions by a converter formed by DNA-disengaged RuvB subunits stimulates ATP hydrolysis and nucleotide exchange. Immobilization of the converter enables RuvB to convert the ATP-contained energy into a lever motion, pulling 2 nucleotides of DNA out of the RuvA tetramer per ATP hydrolyzed, thus driving DNA branch migration. The RuvB motors rotate together with the DNA substrate, which together with the progressing nucleotide cycle form the mechanistic basis for DNA recombination by continuous HJ branch migration. Branch migration allows RuvC to scan DNA until it finds its consensus sequence, where it cleaves and resolves cruciform DNA. This chain is Holliday junction branch migration complex subunit RuvB, found in Bacillus thuringiensis (strain Al Hakam).